We begin with the raw amino-acid sequence, 452 residues long: Gastrin/cholecystokinin type B receptor (452 aa).

The segment at 1 to 21 (MELLKLNRSVQGPGPGSGSSL) is disordered. The Extracellular portion of the chain corresponds to 1-57 (MELLKLNRSVQGPGPGSGSSLCRPGVSLLNSSSAGNLSCDPPRIRGTGTRELEMAIR). Residues N7, N30, and N36 are each glycosylated (N-linked (GlcNAc...) asparagine). The helical transmembrane segment at 58–79 (ITLYAVIFLMSVGGNVLIIVVL) threads the bilayer. Residues 80 to 87 (GLSRRLRT) lie on the Cytoplasmic side of the membrane. The chain crosses the membrane as a helical span at residues 88–109 (VTNAFLLSLAVSDLLLAVACMP). The Extracellular segment spans residues 110 to 131 (FTLLPNLMGTFIFGTVICKAIS). C127 and C205 form a disulfide bridge. The chain crosses the membrane as a helical span at residues 132–150 (YLMGVSVSVSTLNLVAIAL). Topologically, residues 151 to 170 (ERYSAICRPLQARVWQTRSH) are cytoplasmic. A helical transmembrane segment spans residues 171 to 189 (AARVILATWLLSGLLMVPY). The Extracellular segment spans residues 190-219 (PVYTMVQPVGPRVLQCMHRWPSARVQQTWS). Residues 220–242 (VLLLLLLFFIPGVVIAVAYGLIS) traverse the membrane as a helical segment. Residues 243–338 (RELYLGLHFD…KLLAKKRVVR (96 aa)) are Cytoplasmic-facing. The disordered stretch occupies residues 257–286 (SETQSRARNQGGLPGGAAPGPVHQNGGCRP). The helical transmembrane segment at 339 to 360 (MLLVIVLLFFLCWLPVYSVNTW) threads the bilayer. At 361 to 378 (RAFDGPGAQRALSGAPIS) the chain is on the extracellular side. Residues 379 to 399 (FIHLLSYVSACVNPLVYCFMH) form a helical membrane-spanning segment. The Cytoplasmic segment spans residues 400–452 (RRFRQACLDTCARCCPRPPRARPQPLPDEDPPTPSIASLSRLSYTTISTLGPG). C413 carries S-palmitoyl cysteine lipidation. Positions 421 to 452 (RPQPLPDEDPPTPSIASLSRLSYTTISTLGPG) are disordered. Positions 434–452 (SIASLSRLSYTTISTLGPG) are enriched in polar residues.

This sequence belongs to the G-protein coupled receptor 1 family. As to expression, parietal cells, pancreas, brain and various neoplastic tissues.

The protein resides in the cell membrane. Its function is as follows. Receptor for gastrin and cholecystokinin. The CCK-B receptors occur throughout the central nervous system where they modulate anxiety, analgesia, arousal, and neuroleptic activity. This receptor mediates its action by association with G proteins that activate a phosphatidylinositol-calcium second messenger system. This is Gastrin/cholecystokinin type B receptor (Cckbr) from Rattus norvegicus (Rat).